The sequence spans 215 residues: Small ribosomal subunit protein uS7 (215 aa).

Belongs to the universal ribosomal protein uS7 family. In terms of assembly, part of the 30S ribosomal subunit.

In terms of biological role, one of the primary rRNA binding proteins, it binds directly to 16S rRNA where it nucleates assembly of the head domain of the 30S subunit. Is located at the subunit interface close to the decoding center. In Thermococcus celer, this protein is Small ribosomal subunit protein uS7.